Consider the following 1015-residue polypeptide: Putative ankyrin repeat protein R96 (1015 aa).

A compositionally biased stretch (basic residues) spans 1-14; that stretch reads MSTVKKSSKKKSSK. The disordered stretch occupies residues 1 to 37; that stretch reads MSTVKKSSKKKSSKKSSSGNESSKKSSPKIVPKHTAK. ANK repeat units lie at residues 136–165, 168–201, 202–231, 340–370, 374–403, 456–485, 498–527, and 535–564; these read NGHK…NIDF, APSN…AVNI, DGRS…DVEV, LGHN…DFQA, NITN…KIVS, SGYR…TIFA, NNND…QFQL, and TVPT…ITDC.

The sequence is that of Putative ankyrin repeat protein R96 from Acanthamoeba polyphaga mimivirus (APMV).